The following is a 494-amino-acid chain: Ketol-acid reductoisomerase (NADP(+)) (494 aa).

The region spanning 14–208 (LEQLGKCRFM…GGHRAGVLQS (195 aa)) is the KARI N-terminal Rossmann domain. Residues 45 to 48 (CGAQ), arginine 68, arginine 76, serine 78, and 108 to 110 (DKQ) contribute to the NADP(+) site. Histidine 132 is a catalytic residue. Residue glycine 158 coordinates NADP(+). KARI C-terminal knotted domains lie at 209–344 (SFVA…NAPA) and 345–487 (FDGA…MKDM). Residues aspartate 217, glutamate 221, glutamate 389, and glutamate 393 each contribute to the Mg(2+) site. Serine 414 provides a ligand contact to substrate.

The protein belongs to the ketol-acid reductoisomerase family. Requires Mg(2+) as cofactor.

The enzyme catalyses (2R)-2,3-dihydroxy-3-methylbutanoate + NADP(+) = (2S)-2-acetolactate + NADPH + H(+). It carries out the reaction (2R,3R)-2,3-dihydroxy-3-methylpentanoate + NADP(+) = (S)-2-ethyl-2-hydroxy-3-oxobutanoate + NADPH + H(+). Its pathway is amino-acid biosynthesis; L-isoleucine biosynthesis; L-isoleucine from 2-oxobutanoate: step 2/4. It participates in amino-acid biosynthesis; L-valine biosynthesis; L-valine from pyruvate: step 2/4. In terms of biological role, involved in the biosynthesis of branched-chain amino acids (BCAA). Catalyzes an alkyl-migration followed by a ketol-acid reduction of (S)-2-acetolactate (S2AL) to yield (R)-2,3-dihydroxy-isovalerate. In the isomerase reaction, S2AL is rearranged via a Mg-dependent methyl migration to produce 3-hydroxy-3-methyl-2-ketobutyrate (HMKB). In the reductase reaction, this 2-ketoacid undergoes a metal-dependent reduction by NADPH to yield (R)-2,3-dihydroxy-isovalerate. The chain is Ketol-acid reductoisomerase (NADP(+)) from Tolumonas auensis (strain DSM 9187 / NBRC 110442 / TA 4).